The primary structure comprises 201 residues: Twin horsetail protein 2 (201 aa).

The protein localises to the nucleus. Required for correct meiotic chromosome segregation and recombination. The protein is Twin horsetail protein 2 (tht2) of Schizosaccharomyces pombe (strain 972 / ATCC 24843) (Fission yeast).